A 507-amino-acid polypeptide reads, in one-letter code: ATP synthase subunit alpha, chloroplastic (507 aa).

170 to 177 contacts ATP; that stretch reads GDRQTGKT.

It belongs to the ATPase alpha/beta chains family. F-type ATPases have 2 components, CF(1) - the catalytic core - and CF(0) - the membrane proton channel. CF(1) has five subunits: alpha(3), beta(3), gamma(1), delta(1), epsilon(1). CF(0) has four main subunits: a, b, b' and c.

Its subcellular location is the plastid. The protein localises to the chloroplast thylakoid membrane. The catalysed reaction is ATP + H2O + 4 H(+)(in) = ADP + phosphate + 5 H(+)(out). Its function is as follows. Produces ATP from ADP in the presence of a proton gradient across the membrane. The alpha chain is a regulatory subunit. In Piper cenocladum (Ant piper), this protein is ATP synthase subunit alpha, chloroplastic.